The following is a 212-amino-acid chain: WAP four-disulfide core domain protein 1 (212 aa).

The first 26 residues, 1–26, serve as a signal peptide directing secretion; sequence MGSCDRKALWALSFLLLLLGSSSVQG. The segment at 43-62 is disordered; the sequence is EEVAATGSRQPHADRCPPPP. In terms of domain architecture, WAP spans 51-100; that stretch reads RQPHADRCPPPPRTLPPGACQATRCQSDSECPRHRRCCYNGCAYACLEAV. 4 cysteine pairs are disulfide-bonded: cysteine 58–cysteine 88, cysteine 70–cysteine 92, cysteine 75–cysteine 87, and cysteine 81–cysteine 96. A disordered region spans residues 191–212; sequence EYPEGDSKYVAEPGKGQQRHFP.

Vascular smooth muscle and prostate. Periacinar ring.

It is found in the secreted. Has growth inhibitory activity. The chain is WAP four-disulfide core domain protein 1 (Wfdc1) from Rattus norvegicus (Rat).